A 1624-amino-acid chain; its full sequence is Pappalysin-1 (1624 aa).

Residues 1–22 (MRLWSWVLRLGLLSAALGCGLA) form the signal peptide. The propeptide occupies 23 to 81 (ERPRRVRRDPRAVRPPRPAAGPATCATRAARGRRASPPPPPGGAWEAVRVPRRRQQRAA). Positions 28-93 (VRRDPRAVRP…AEEPSPPSRA (66 aa)) are disordered. Low complexity predominate over residues 42-51 (AGPATCATRA). Disulfide bonds link Cys141-Cys232, Cys324-Cys619, Cys329-Cys654, Cys411-Cys425, Cys421-Cys437, Cys454-Cys470, Cys471-Cys482, Cys580-Cys597, Cys584-Cys609, Cys707-Cys875, Cys710-Cys878, Cys750-Cys832, Cys772-Cys778, Cys944-Cys972, Cys957-Cys968, Cys980-Cys987, and Cys996-Cys1008. The metalloprotease stretch occupies residues 272 to 583 (RGLHTPLPQL…ISEIQSCSDP (312 aa)). Asn387 and Asn398 each carry an N-linked (GlcNAc...) asparagine glycan. N-linked (GlcNAc...) asparagine glycosylation is present at Asn426. Asn516 carries N-linked (GlcNAc...) asparagine glycosylation. His559 provides a ligand contact to Zn(2+). Glu560 is an active-site residue. Zn(2+) is bound by residues His563 and His569. N-linked (GlcNAc...) asparagine glycosylation is found at Asn598, Asn616, and Asn722. Residue Asn822 is glycosylated (N-linked (GlcNAc...) asparagine). The N-linked (GlcNAc...) asparagine glycan is linked to Asn1023. 19 disulfide bridges follow: Cys1033–Cys1067, Cys1048–Cys1136, Cys1189–Cys1202, Cys1212–Cys1266, Cys1224–Cys1235, Cys1239–Cys1277, Cys1282–Cys1326, Cys1297–Cys1307, Cys1311–Cys1339, Cys1343–Cys1396, Cys1359–Cys1370, Cys1374–Cys1407, Cys1412–Cys1455, Cys1425–Cys1435, Cys1439–Cys1468, Cys1475–Cys1536, Cys1489–Cys1499, Cys1503–Cys1551, and Cys1555–Cys1573. Sushi domains follow at residues 1210 to 1279 (ADCP…ACEP), 1280 to 1341 (VDCG…LCEL), 1342 to 1409 (MCLA…TCVP), 1410 to 1470 (VTCD…VCRE), and 1473 to 1553 (GQCS…HCVK). Asn1219 and Asn1223 each carry an N-linked (GlcNAc...) asparagine glycan. The N-linked (GlcNAc...) asparagine glycan is linked to Asn1320. A glycan (N-linked (GlcNAc...) asparagine) is linked at Asn1516.

Belongs to the peptidase M43B family. In terms of assembly, homodimer; disulfide-linked. In pregnancy serum, predominantly found as a disulfide-linked 2:2 heterotetramer with the proform of PRG2. The cofactor is Zn(2+). As to expression, detected in kidney, spleen, brain, ovary, breast, skin, prostate, uterus, and placenta.

The protein localises to the secreted. The enzyme catalyses Cleavage of the 135-Met-|-Lys-136 bond in insulin-like growth factor binding protein (IGFBP)-4, and the 143-Ser-|-Lys-144 bond in IGFBP-5.. In terms of biological role, metalloproteinase which specifically cleaves IGFBP-4 and IGFBP-5, resulting in release of bound IGF. Cleavage of IGFBP-4 is dramatically enhanced by the presence of IGF, whereas cleavage of IGFBP-5 is slightly inhibited by the presence of IGF. Isoform 2 cleaves IGFBP-4 very slowly compared to PAPP-A, but its ability to cleave IGFBP-5 is unaffected. This chain is Pappalysin-1 (Pappa), found in Mus musculus (Mouse).